Here is a 147-residue protein sequence, read N- to C-terminus: Transcriptional regulator MraZ (147 aa).

SpoVT-AbrB domains follow at residues 5–50 (AVAL…PLTA) and 79–122 (AQEE…SDAG).

Belongs to the MraZ family. As to quaternary structure, forms oligomers.

Its subcellular location is the cytoplasm. The protein localises to the nucleoid. In Azoarcus sp. (strain BH72), this protein is Transcriptional regulator MraZ.